Here is an 88-residue protein sequence, read N- to C-terminus: UPF0298 protein Bcer98_2635 (88 aa).

The protein belongs to the UPF0298 family.

It is found in the cytoplasm. The sequence is that of UPF0298 protein Bcer98_2635 from Bacillus cytotoxicus (strain DSM 22905 / CIP 110041 / 391-98 / NVH 391-98).